The chain runs to 444 residues: Coagulation factor VII (444 aa).

An N-terminal signal peptide occupies residues 1-21 (MAPQARGLGLCSLLALQASLA). Residues 22 to 39 (AVFITQEEAHSVLRRQRR) constitute a propeptide that is removed on maturation. The region spanning 40–84 (ANSFLEELRPGSLERECKEELCSFEEAREVFQSTERTKQFWITYN) is the Gla domain. 4-carboxyglutamate occurs at positions 45, 46, 53, 55, 58, 59, 64, 65, 68, and 74. A disulfide bridge connects residues Cys56 and Cys61. Residues 85–121 (DGDQCASNPCQNGGSCEDQIQSYICFCLADFEGRNCE) enclose the EGF-like 1; calcium-binding domain. Disulfide bonds link Cys89–Cys100, Cys94–Cys109, Cys111–Cys120, Cys130–Cys141, Cys137–Cys151, Cys153–Cys166, Cys174–Cys301, Cys198–Cys203, and Cys217–Cys233. The O-linked (Glc...) serine; alternate glycan is linked to Ser91. Residue Ser91 is glycosylated (O-linked (Xyl...) serine; alternate). The O-linked (Fuc) serine glycan is linked to Ser99. Position 102 is a (3R)-3-hydroxyaspartate (Asp102). Residues 126-167 (DQLICMYENGGCEQYCSDHVGSQRSCRCHEGYTLLPNGVSCT) enclose the EGF-like 2 domain. The 240-residue stretch at 192–431 (IVGGKVCPKG…YTEWLSRLMR (240 aa)) folds into the Peptidase S1 domain. Asn211 is a glycosylation site (N-linked (GlcNAc...) asparagine). His232 (charge relay system) is an active-site residue. N-linked (GlcNAc...) asparagine glycosylation is present at Asn242. The active-site Charge relay system is the Asp281. Asn306 carries an N-linked (GlcNAc...) asparagine glycan. Cys349 and Cys368 are oxidised to a cystine. Asp377 contacts substrate. The cysteines at positions 379 and 407 are disulfide-linked. Ser383 (charge relay system) is an active-site residue.

Belongs to the peptidase S1 family. In terms of assembly, heterodimer of a light chain and a heavy chain linked by a disulfide bond. Post-translationally, the vitamin K-dependent, enzymatic carboxylation of some glutamate residues allows the modified protein to bind calcium. In terms of processing, the iron and 2-oxoglutarate dependent 3-hydroxylation of aspartate and asparagine is (R) stereospecific within EGF domains. O-glycosylated. O-fucosylated by POFUT1 on a conserved serine or threonine residue found in the consensus sequence C2-X(4,5)-[S/T]-C3 of EGF domains, where C2 and C3 are the second and third conserved cysteines. Post-translationally, can be either O-glucosylated or O-xylosylated at Ser-91 by POGLUT1. In terms of tissue distribution, plasma.

Its subcellular location is the secreted. The enzyme catalyses Selective cleavage of Arg-|-Ile bond in factor X to form factor Xa.. Initiates the extrinsic pathway of blood coagulation. Serine protease that circulates in the blood in a zymogen form. Factor VII is converted to factor VIIa by factor Xa, factor XIIa, factor IXa, or thrombin by minor proteolysis. In the presence of tissue factor and calcium ions, factor VIIa then converts factor X to factor Xa by limited proteolysis. Factor VIIa also converts factor IX to factor IXa in the presence of tissue factor and calcium. This Oryctolagus cuniculus (Rabbit) protein is Coagulation factor VII (F7).